Here is a 149-residue protein sequence, read N- to C-terminus: uncharacterized protein (149 aa).

An N-acetyltransferase domain is found at 2 to 146 (LEVKTISVED…NHIVMYKTLR (145 aa)).

Belongs to the acetyltransferase family.

This is an uncharacterized protein from Bacillus subtilis (strain 168).